Here is a 106-residue protein sequence, read N- to C-terminus: Large ribosomal subunit protein uL24 (106 aa).

Belongs to the universal ribosomal protein uL24 family. In terms of assembly, part of the 50S ribosomal subunit.

Functionally, one of two assembly initiator proteins, it binds directly to the 5'-end of the 23S rRNA, where it nucleates assembly of the 50S subunit. In terms of biological role, one of the proteins that surrounds the polypeptide exit tunnel on the outside of the subunit. The protein is Large ribosomal subunit protein uL24 of Parabacteroides distasonis (strain ATCC 8503 / DSM 20701 / CIP 104284 / JCM 5825 / NCTC 11152).